We begin with the raw amino-acid sequence, 511 residues long: Transcription factor bHLH28 (511 aa).

The region spanning 339–388 (DKPLNHVEAERMRREKLNHRFYALRAVVPNVSKMDKTSLLEDAVCYINEL) is the bHLH domain.

In terms of assembly, homodimer.

The protein localises to the nucleus. This is Transcription factor bHLH28 (BHLH28) from Arabidopsis thaliana (Mouse-ear cress).